The chain runs to 224 residues: Endonuclease NucS (224 aa).

Belongs to the NucS endonuclease family.

The protein localises to the cytoplasm. Cleaves both 3' and 5' ssDNA extremities of branched DNA structures. The protein is Endonuclease NucS of Rhodococcus erythropolis (strain PR4 / NBRC 100887).